Reading from the N-terminus, the 332-residue chain is dTDP-3,4-didehydro-2,6-dideoxy-alpha-D-glucose 3-reductase (332 aa).

Residue 17 to 23 (CADIAWR) coordinates NADP(+). Arg-24 contributes to the substrate binding site. Residues 42 to 43 (SR), Tyr-63, Leu-79, and His-84 each bind NADP(+). Lys-102 serves as the catalytic Proton donor. Residues Arg-170 and Asp-182 each contribute to the NADP(+) site. Residues Tyr-240 and Thr-260 each contribute to the substrate site.

This sequence belongs to the Gfo/Idh/MocA family. In terms of assembly, homotetramer; dimer of dimers.

The catalysed reaction is dTDP-4-dehydro-2,6-dideoxy-alpha-D-glucose + NADP(+) = dTDP-3,4-didehydro-2,6-dideoxy-alpha-D-glucose + NADPH + H(+). Its pathway is antibiotic biosynthesis. Involved in the biosynthesis of L-digitoxose, an unusual dideoxysugar attached to various pharmacologically active natural products, including the antitumor antibiotic tetrocarcin A, and the antibiotics kijanimicin and jadomycin B. Catalyzes the reduction of the C-3 keto moiety of dTDP-3,4-diketo-2,6-dideoxy-alpha-D-glucose to yield dTDP-4-keto-2,6-dideoxy-alpha-D-glucose. Also able to reduce dTDP-3-keto-6-deoxy-D-galactose and dTDP-3-keto-6-deoxy-D-glucose to yield dTDP-fucose and dTDP-quinovose, respectively. The polypeptide is dTDP-3,4-didehydro-2,6-dideoxy-alpha-D-glucose 3-reductase (Actinomadura kijaniata).